The primary structure comprises 614 residues: Probable pectinesterase/pectinesterase inhibitor 13 (614 aa).

A helical transmembrane segment spans residues 25 to 45 (IIVGTVSLLVVVAAIVGGAFA). The interval 55–102 (QQQQQQQAKNHNKSGSGNNVVKDSDKKSPSPPTPSQKAPVSAAQSVKP) is disordered. N-linked (GlcNAc...) asparagine glycans are attached at residues Asn-66, Asn-128, Asn-197, Asn-243, Asn-301, Asn-351, and Asn-367. Residues 103 to 255 (GQGDKIIQTL…QVLTSNSLAL (153 aa)) are pectinesterase inhibitor 13. A pectinesterase 13 region spans residues 301 to 598 (NATVAKDGSG…YTVGPFLQGD (298 aa)). Substrate contacts are provided by Thr-376 and Gln-406. Asp-429 functions as the Proton donor; for pectinesterase activity in the catalytic mechanism. Cysteines 443 and 463 form a disulfide. Residue Asp-450 is the Nucleophile; for pectinesterase activity of the active site. Substrate is bound by residues Arg-518 and Trp-520. Asn-522 and Asn-588 each carry an N-linked (GlcNAc...) asparagine glycan.

This sequence in the N-terminal section; belongs to the PMEI family. In the C-terminal section; belongs to the pectinesterase family. Expressed in flower buds.

It localises to the membrane. It carries out the reaction [(1-&gt;4)-alpha-D-galacturonosyl methyl ester](n) + n H2O = [(1-&gt;4)-alpha-D-galacturonosyl](n) + n methanol + n H(+). The protein operates within glycan metabolism; pectin degradation; 2-dehydro-3-deoxy-D-gluconate from pectin: step 1/5. Acts in the modification of cell walls via demethylesterification of cell wall pectin. The protein is Probable pectinesterase/pectinesterase inhibitor 13 (PME13) of Arabidopsis thaliana (Mouse-ear cress).